The following is a 156-amino-acid chain: Small ribosomal subunit protein uS7 (156 aa).

It belongs to the universal ribosomal protein uS7 family. In terms of assembly, part of the 30S ribosomal subunit. Contacts proteins S9 and S11.

In terms of biological role, one of the primary rRNA binding proteins, it binds directly to 16S rRNA where it nucleates assembly of the head domain of the 30S subunit. Is located at the subunit interface close to the decoding center, probably blocks exit of the E-site tRNA. The chain is Small ribosomal subunit protein uS7 from Sodalis glossinidius (strain morsitans).